The primary structure comprises 133 residues: MASFITRAERSGNIFSRVTGLIRAGQLNWADRPLWYDVYVSSPPLTPPDWNVKLAKYDEPIRSIFYEEDVLRAKFYKTYRSTAGIQVDSSRTSVSQQFINEYKLVKSENAEATDDQLFEMTQKRLNENGIVLK.

The protein belongs to the mitochondrion-specific ribosomal protein mS23 family. As to quaternary structure, component of the mitochondrial ribosome small subunit (28S) which comprises a 12S rRNA and about 30 distinct proteins.

It localises to the mitochondrion. The sequence is that of Small ribosomal subunit protein mS23 (mrps-23) from Caenorhabditis elegans.